We begin with the raw amino-acid sequence, 512 residues long: ATP synthase subunit alpha (512 aa).

169–176 contributes to the ATP binding site; the sequence is GDRQTGKT.

This sequence belongs to the ATPase alpha/beta chains family. F-type ATPases have 2 components, CF(1) - the catalytic core - and CF(0) - the membrane proton channel. CF(1) has five subunits: alpha(3), beta(3), gamma(1), delta(1), epsilon(1). CF(0) has three main subunits: a(1), b(2) and c(9-12). The alpha and beta chains form an alternating ring which encloses part of the gamma chain. CF(1) is attached to CF(0) by a central stalk formed by the gamma and epsilon chains, while a peripheral stalk is formed by the delta and b chains.

It is found in the cell inner membrane. The enzyme catalyses ATP + H2O + 4 H(+)(in) = ADP + phosphate + 5 H(+)(out). In terms of biological role, produces ATP from ADP in the presence of a proton gradient across the membrane. The alpha chain is a regulatory subunit. The protein is ATP synthase subunit alpha of Rickettsia akari (strain Hartford).